A 611-amino-acid chain; its full sequence is Protein PES4 (611 aa).

A disordered region spans residues 37–81 (FNPVVTPIRPDDYHEKTSRSSSSSHSDSPEFLRINNNKSGHKNGK). A compositionally biased stretch (basic and acidic residues) spans 45-54 (RPDDYHEKTS). 4 consecutive RRM domains span residues 91 to 169 (VPLF…PSLR), 179 to 247 (TNVF…GKKI), 303 to 379 (NSIF…RAQD), and 393 to 471 (STLF…WERQ).

Its subcellular location is the nucleus. In Saccharomyces cerevisiae (strain ATCC 204508 / S288c) (Baker's yeast), this protein is Protein PES4 (PES4).